The following is a 344-amino-acid chain: S-adenosylmethionine:tRNA ribosyltransferase-isomerase (344 aa).

This sequence belongs to the QueA family. In terms of assembly, monomer.

It localises to the cytoplasm. The catalysed reaction is 7-aminomethyl-7-carbaguanosine(34) in tRNA + S-adenosyl-L-methionine = epoxyqueuosine(34) in tRNA + adenine + L-methionine + 2 H(+). The protein operates within tRNA modification; tRNA-queuosine biosynthesis. Functionally, transfers and isomerizes the ribose moiety from AdoMet to the 7-aminomethyl group of 7-deazaguanine (preQ1-tRNA) to give epoxyqueuosine (oQ-tRNA). The sequence is that of S-adenosylmethionine:tRNA ribosyltransferase-isomerase from Lactiplantibacillus plantarum (strain ATCC BAA-793 / NCIMB 8826 / WCFS1) (Lactobacillus plantarum).